The chain runs to 193 residues: Ferredoxin-2, mitochondrial (193 aa).

Residues 38-70 (QATPEKLETSNEEEGSSSAQITAGVESDAENQR) form a disordered region. The region spanning 78–180 (VEVVFLDRSG…GAEFTLPKIT (103 aa)) is the 2Fe-2S ferredoxin-type domain. Positions 115, 121, 124, and 161 each coordinate [2Fe-2S] cluster.

This sequence belongs to the adrenodoxin/putidaredoxin family. As to quaternary structure, component of the mitochondrial core iron-sulfur cluster (ISC) complex composed of NFS1, LYRM4, NDUFAB1, ISCU, FXN, and FDX2; this complex is a heterohexamer containing two copies of each monomer. [2Fe-2S] cluster is required as a cofactor.

The protein localises to the mitochondrion. It localises to the mitochondrion matrix. Electron donor, of the core iron-sulfur cluster (ISC) assembly complex, that acts to reduce the persulfide into sulfide during [2Fe-2S] clusters assembly on the scaffolding protein ISCU. The core iron-sulfur cluster (ISC) assembly complex is involved in the de novo synthesis of a [2Fe-2S] cluster, the first step of the mitochondrial iron-sulfur protein biogenesis. This process is initiated by the cysteine desulfurase complex (NFS1:LYRM4:NDUFAB1) that produces persulfide which is delivered on the scaffold protein ISCU in a FXN-dependent manner. Then this complex is stabilized by FDX2 which provides reducing equivalents to accomplish the [2Fe-2S] cluster assembly. Finally, the [2Fe-2S] cluster is transferred from ISCU to chaperone proteins, including HSCB, HSPA9 and GLRX5. Essential for coenzyme Q biosynthesis: together with FDXR, transfers the electrons required for the hydroxylation reaction performed by COQ6. The polypeptide is Ferredoxin-2, mitochondrial (Xenopus laevis (African clawed frog)).